The primary structure comprises 544 residues: CTP synthase (544 aa).

An amidoligase domain region spans residues 1 to 267 (MTKFVFVTGG…AQRVLEILNL (267 aa)). Ser13 is a CTP binding site. Position 13 (Ser13) interacts with UTP. 14-19 (SIGKGI) serves as a coordination point for ATP. Tyr54 lines the L-glutamine pocket. Asp71 serves as a coordination point for ATP. Residues Asp71 and Glu141 each coordinate Mg(2+). CTP is bound by residues 148–150 (DIE), 188–193 (KTKPTQ), and Lys224. UTP is bound by residues 188-193 (KTKPTQ) and Lys224. The region spanning 292–534 (EIAIVGKYVR…IEAALRSRPQ (243 aa)) is the Glutamine amidotransferase type-1 domain. Gly354 serves as a coordination point for L-glutamine. Cys381 functions as the Nucleophile; for glutamine hydrolysis in the catalytic mechanism. L-glutamine is bound by residues 382–385 (LGMQ), Glu405, and Arg462. Residues His507 and Glu509 contribute to the active site.

It belongs to the CTP synthase family. Homotetramer.

The enzyme catalyses UTP + L-glutamine + ATP + H2O = CTP + L-glutamate + ADP + phosphate + 2 H(+). The catalysed reaction is L-glutamine + H2O = L-glutamate + NH4(+). It carries out the reaction UTP + NH4(+) + ATP = CTP + ADP + phosphate + 2 H(+). The protein operates within pyrimidine metabolism; CTP biosynthesis via de novo pathway; CTP from UDP: step 2/2. Allosterically activated by GTP, when glutamine is the substrate; GTP has no effect on the reaction when ammonia is the substrate. The allosteric effector GTP functions by stabilizing the protein conformation that binds the tetrahedral intermediate(s) formed during glutamine hydrolysis. Inhibited by the product CTP, via allosteric rather than competitive inhibition. Catalyzes the ATP-dependent amination of UTP to CTP with either L-glutamine or ammonia as the source of nitrogen. Regulates intracellular CTP levels through interactions with the four ribonucleotide triphosphates. The sequence is that of CTP synthase from Synechococcus sp. (strain JA-2-3B'a(2-13)) (Cyanobacteria bacterium Yellowstone B-Prime).